The chain runs to 532 residues: Mitogen-activated protein kinase kinase mkk1 (532 aa).

Positions 235–505 (IVELGGLGEG…PWKMLEHPWM (271 aa)) constitute a Protein kinase domain. ATP contacts are provided by residues 241 to 249 (LGEGAGGAV) and K264. Residue D362 is the Proton acceptor of the active site.

This sequence belongs to the protein kinase superfamily. STE Ser/Thr protein kinase family. MAP kinase kinase subfamily.

It catalyses the reaction L-seryl-[protein] + ATP = O-phospho-L-seryl-[protein] + ADP + H(+). The catalysed reaction is L-threonyl-[protein] + ATP = O-phospho-L-threonyl-[protein] + ADP + H(+). Mitogen-activated protein kinase kinase, part of the mkh1-mkk1-spm1 MAPK cascade that regulates regulates vegetative growth, conidial formation, colony surface hydrophobicity, osmotic stress, cell wall integrity maintenance, carbon and nitrogen source utilization, chitin distribution, septa formation, and pathogenicity. This chain is Mitogen-activated protein kinase kinase mkk1, found in Cytospora mali (Apple Valsa canker fungus).